The following is a 461-amino-acid chain: Photosystem II CP43 reaction center protein (461 aa).

The next 5 helical transmembrane spans lie at Leu57–Ala81, Leu122–Asn143, Lys166–Ser188, Lys243–Ser263, and Trp279–Ser300. Residue Glu355 coordinates [CaMn4O5] cluster. Residues Arg435–Asp459 form a helical membrane-spanning segment.

This sequence belongs to the PsbB/PsbC family. PsbC subfamily. In terms of assembly, PSII is composed of 1 copy each of membrane proteins PsbA, PsbB, PsbC, PsbD, PsbE, PsbF, PsbH, PsbI, PsbJ, PsbK, PsbL, PsbM, PsbT, PsbX, PsbY, PsbZ, Psb30/Ycf12, peripheral proteins PsbO, CyanoQ (PsbQ), PsbU, PsbV and a large number of cofactors. It forms dimeric complexes. Binds multiple chlorophylls and provides some of the ligands for the Ca-4Mn-5O cluster of the oxygen-evolving complex. It may also provide a ligand for a Cl- that is required for oxygen evolution. PSII binds additional chlorophylls, carotenoids and specific lipids. serves as cofactor.

Its subcellular location is the cellular thylakoid membrane. One of the components of the core complex of photosystem II (PSII). It binds chlorophyll and helps catalyze the primary light-induced photochemical processes of PSII. PSII is a light-driven water:plastoquinone oxidoreductase, using light energy to abstract electrons from H(2)O, generating O(2) and a proton gradient subsequently used for ATP formation. The sequence is that of Photosystem II CP43 reaction center protein from Synechococcus elongatus (strain ATCC 33912 / PCC 7942 / FACHB-805) (Anacystis nidulans R2).